A 301-amino-acid polypeptide reads, in one-letter code: F-box protein At4g02733 (301 aa).

Positions 91 to 146 constitute an F-box domain; that stretch reads NSISWFLPSELTVKVFSMVDTKSLMQASACCTMFNNCAMDPLCYFHIDLTKAFKHV.

In Arabidopsis thaliana (Mouse-ear cress), this protein is F-box protein At4g02733.